We begin with the raw amino-acid sequence, 367 residues long: Putative heat shock 70 kDa protein 7 (367 aa).

Belongs to the heat shock protein 70 family.

The protein is Putative heat shock 70 kDa protein 7 (HSPA7) of Homo sapiens (Human).